A 143-amino-acid chain; its full sequence is Large ribosomal subunit protein uL16c (143 aa).

This sequence belongs to the universal ribosomal protein uL16 family. As to quaternary structure, part of the 50S ribosomal subunit.

The protein resides in the plastid. The protein localises to the chloroplast. This Marchantia polymorpha (Common liverwort) protein is Large ribosomal subunit protein uL16c.